The sequence spans 556 residues: Transcription factor IIIB 70 kDa subunit (556 aa).

The TFIIB-type zinc-finger motif lies at Ser-8–Glu-41. Cys-12, Cys-15, Cys-33, and Cys-36 together coordinate Zn(2+). Tandem repeats lie at residues Leu-98–Lys-174 and Ile-193–Glu-272. Residues Leu-98–Glu-272 are interaction with TBP and with the Pol III subunit C34. An interaction with TBP region spans residues Lys-284 to Lys-556. Disordered stretches follow at residues Arg-287 to Lys-309 and Ala-477 to Ala-501. Residues Glu-295–Lys-309 are compositionally biased toward basic and acidic residues. The segment covering Leu-486–Asn-495 has biased composition (basic residues).

It belongs to the TFIIB family. In terms of assembly, TFIIIB comprises the TATA-binding protein (TBP), the B-related factor (BRF) and a 70 kDa polypeptide.

It localises to the nucleus. General activator of RNA polymerase III transcription. Interacts with TBP. Binds to Pol III subunit C34 and to the TAU135 component of TFIIIC. This Kluyveromyces lactis (strain ATCC 8585 / CBS 2359 / DSM 70799 / NBRC 1267 / NRRL Y-1140 / WM37) (Yeast) protein is Transcription factor IIIB 70 kDa subunit (TDS4).